Here is a 220-residue protein sequence, read N- to C-terminus: GTP cyclohydrolase 1 (220 aa).

Residues C113, H116, and C184 each contribute to the Zn(2+) site.

This sequence belongs to the GTP cyclohydrolase I family. Homomer.

It catalyses the reaction GTP + H2O = 7,8-dihydroneopterin 3'-triphosphate + formate + H(+). It functions in the pathway cofactor biosynthesis; 7,8-dihydroneopterin triphosphate biosynthesis; 7,8-dihydroneopterin triphosphate from GTP: step 1/1. This Hamiltonella defensa subsp. Acyrthosiphon pisum (strain 5AT) protein is GTP cyclohydrolase 1.